A 117-amino-acid chain; its full sequence is Large ribosomal subunit protein bL19 (117 aa).

The protein belongs to the bacterial ribosomal protein bL19 family.

This protein is located at the 30S-50S ribosomal subunit interface and may play a role in the structure and function of the aminoacyl-tRNA binding site. The sequence is that of Large ribosomal subunit protein bL19 from Aliivibrio salmonicida (strain LFI1238) (Vibrio salmonicida (strain LFI1238)).